A 487-amino-acid chain; its full sequence is Solute carrier family 22 member 15-like (487 aa).

A helical transmembrane segment spans residues 23–43; it reads FLTLLQIYVACQSMLIVLVGA. Asn70 carries an N-linked (GlcNAc...) asparagine glycan. Helical transmembrane passes span 90–110, 117–137, 141–161, 178–198, 203–223, 286–306, 315–335, 345–365, 374–394, 408–428, and 435–455; these read LASS…GPLS, PVYL…ALAP, VFAV…LVSF, SLTN…GFYI, TLAF…FVLP, ILLM…TLNA, LNVA…LYFI, ATAG…FVPE, TVLA…VYIY, LGVC…IPAM, and MPFV…LLLP.

Belongs to the major facilitator (TC 2.A.1) superfamily. Organic cation transporter (TC 2.A.1.19) family.

It is found in the membrane. In terms of biological role, probably transports organic cations. This Xenopus laevis (African clawed frog) protein is Solute carrier family 22 member 15-like (slc22a15b).